The chain runs to 548 residues: Esterase-5A (548 aa).

The signal sequence occupies residues 1-19 (MHLVRWLICLIQLWIQLGA). A disulfide bridge links Cys87 with Cys106. Asn95 and Asn116 each carry an N-linked (GlcNAc...) asparagine glycan. The active-site Acyl-ester intermediate is Ser210. Residues Cys262 and Cys274 are joined by a disulfide bond. The N-linked (GlcNAc...) asparagine glycan is linked to Asn479. Cys518 and Cys539 form a disulfide bridge.

It belongs to the type-B carboxylesterase/lipase family.

The protein localises to the secreted. The enzyme catalyses a carboxylic ester + H2O = an alcohol + a carboxylate + H(+). This chain is Esterase-5A (Est-5A), found in Drosophila persimilis (Fruit fly).